The sequence spans 225 residues: Ribosome maturation factor RimM (225 aa).

The PRC barrel domain occupies 144–225 (ADEFYWVDLI…RIVVDWEADY (82 aa)).

The protein belongs to the RimM family. As to quaternary structure, binds ribosomal protein uS19.

The protein resides in the cytoplasm. An accessory protein needed during the final step in the assembly of 30S ribosomal subunit, possibly for assembly of the head region. Essential for efficient processing of 16S rRNA. May be needed both before and after RbfA during the maturation of 16S rRNA. It has affinity for free ribosomal 30S subunits but not for 70S ribosomes. The sequence is that of Ribosome maturation factor RimM from Burkholderia vietnamiensis (strain G4 / LMG 22486) (Burkholderia cepacia (strain R1808)).